Here is a 255-residue protein sequence, read N- to C-terminus: Myogenic factor 5 (255 aa).

The 52-residue stretch at 83–134 (DRRKAATMRERRRLKKVNQAFETLKRCTTTNPNQRLPKVEILRNAIQYIESL) folds into the bHLH domain. The span at 221–242 (SLPIPDSITPSPTSSTDSLPRS) shows a compositional bias: low complexity. The segment at 221–246 (SLPIPDSITPSPTSSTDSLPRSPDAH) is disordered.

As to quaternary structure, efficient DNA binding requires dimerization with another bHLH protein.

The protein localises to the nucleus. Its function is as follows. Acts as a transcriptional activator that promotes transcription of muscle-specific target genes and plays a role in muscle differentiation. Induces fibroblasts to differentiate into myoblasts. Probable sequence specific DNA-binding protein. In Xenopus laevis (African clawed frog), this protein is Myogenic factor 5 (myf5).